A 341-amino-acid polypeptide reads, in one-letter code: Vacuolar morphogenesis protein 7 homolog (341 aa).

A PX domain is found at 1-115 (MALKIKIPET…KFLNIKDESE (115 aa)). Positions 214–233 (NSPVAPPSASSQLNSSNPSS) are enriched in low complexity. The tract at residues 214 to 265 (NSPVAPPSASSQLNSSNPSSPFRPLSASTDKQSNTSLNRVLGKNRMPETQTT) is disordered. The segment covering 239–251 (SASTDKQSNTSLN) has biased composition (polar residues). Positions 278 to 340 (NQTMEDQDMQ…HRTRAGLRKL (63 aa)) constitute a t-SNARE coiled-coil homology domain.

Possibly multimeric.

The protein resides in the vacuole. Essential for proper morphogenesis of the vacuole. May exist as structural reinforcement on the surface of the vacuolar membrane and be required for maintenance against rupture by osmotic pressure. In Schizosaccharomyces pombe (strain 972 / ATCC 24843) (Fission yeast), this protein is Vacuolar morphogenesis protein 7 homolog.